A 1024-amino-acid polypeptide reads, in one-letter code: Myosin phosphatase Rho-interacting protein (1024 aa).

Positions 1–382 (MSAAKENPCR…DRRSTESSMT (382 aa)) are interaction with F-actin. Residues 43–150 (KPIYGGWLLL…WLEMLMVYPR (108 aa)) enclose the PH 1 domain. The interval 152-262 (NKQNQKKKRK…GDRVDGGRKV (111 aa)) is disordered. Residues 179–190 (SSSGGSSGSSSS) are compositionally biased toward low complexity. Ser193, Ser219, Ser221, Ser225, and Ser227 each carry phosphoserine. Residues 221 to 233 (SPAQSPSQSQPPA) are compositionally biased toward low complexity. Basic and acidic residues predominate over residues 240–262 (PGLESKEDESTISGDRVDGGRKV). 4 positions are modified to phosphoserine: Ser266, Ser270, Ser289, and Ser292. Disordered stretches follow at residues 274 to 301 (AKQDLRAEEQLPPLLSPPSPSTPHSRRS) and 328 to 379 (PSSD…STES). Position 295 is a phosphothreonine (Thr295). The segment covering 333–349 (RQGRSERRAIPRKRDFA) has biased composition (basic and acidic residues). Ser364 bears the Phosphoserine mark. The 97-residue stretch at 386–482 (LNFKKGWLTK…WIQTIMKHVL (97 aa)) folds into the PH 2 domain. Residues 486 to 583 (APDVTSSLPE…AEPGELERER (98 aa)) form a disordered region. Over residues 488–508 (DVTSSLPEGKNKSTSFETCSR) the composition is skewed to polar residues. Phosphoserine is present on Ser492. Positions 522-545 (PEQKKSRARERRREGRSKTFDWAE) are enriched in basic and acidic residues. Residues 545–823 (EFRPIQQALA…SVQRELEVLS (279 aa)) form an interaction with RHOA region. The residue at position 617 (Ser617) is a Phosphoserine. Thr645 is subject to Phosphothreonine. A coiled-coil region spans residues 672 to 976 (HELTSLLEKE…AATEALGEKS (305 aa)). A Phosphoserine modification is found at Ser799. Residues 823-878 (SEQYSQKCLENAHLAQALEAERQALRQCQRENQELNAHNQELNNRLAAEITRLRTL) form an interaction with PPP1R12A region. The interval 972-995 (LGEKSPEGTTVSGYDIMKSKSNPD) is disordered. 5 positions are modified to phosphoserine: Ser976, Gly979, Ser992, Ser1013, and Ser1015.

As to quaternary structure, binds RHOA, PPP1R12A/MBS and PPP1R12C/MBS85 through adjacent coiled coil domains. Interacts with MYZAP. Binds F-actin through its N-terminus. Expressed in Kidney, Brain, Heart and Lung.

The protein localises to the cytoplasm. The protein resides in the cytoskeleton. In terms of biological role, targets myosin phosphatase to the actin cytoskeleton. Required for the regulation of the actin cytoskeleton by RhoA and ROCK1. Depletion leads to an increased number of stress fibers in smooth muscle cells through stabilization of actin fibers by phosphorylated myosin. Overexpression of MRIP as well as its F-actin-binding region leads to disassembly of stress fibers in neuronal cells. This is Myosin phosphatase Rho-interacting protein (Mprip) from Mus musculus (Mouse).